The chain runs to 362 residues: Adenosine deaminase (362 aa).

The Zn(2+) site is built by His-19 and His-21. Residues His-21, Asp-23, and Gly-181 each coordinate substrate. His-208 is a Zn(2+) binding site. Glu-211 functions as the Proton donor in the catalytic mechanism. Asp-300 is a Zn(2+) binding site.

This sequence belongs to the metallo-dependent hydrolases superfamily. Adenosine and AMP deaminases family. Adenosine deaminase subfamily. Requires Zn(2+) as cofactor.

It carries out the reaction adenosine + H2O + H(+) = inosine + NH4(+). The catalysed reaction is 2'-deoxyadenosine + H2O + H(+) = 2'-deoxyinosine + NH4(+). Functionally, catalyzes the hydrolytic deamination of adenosine and 2-deoxyadenosine. The sequence is that of Adenosine deaminase from Mycobacterium leprae (strain TN).